Here is a 115-residue protein sequence, read N- to C-terminus: Ribonuclease P protein component (115 aa).

Belongs to the RnpA family. In terms of assembly, consists of a catalytic RNA component (M1 or rnpB) and a protein subunit.

It carries out the reaction Endonucleolytic cleavage of RNA, removing 5'-extranucleotides from tRNA precursor.. Functionally, RNaseP catalyzes the removal of the 5'-leader sequence from pre-tRNA to produce the mature 5'-terminus. It can also cleave other RNA substrates such as 4.5S RNA. The protein component plays an auxiliary but essential role in vivo by binding to the 5'-leader sequence and broadening the substrate specificity of the ribozyme. The polypeptide is Ribonuclease P protein component (Blochmanniella pennsylvanica (strain BPEN)).